Consider the following 241-residue polypeptide: Small ribosomal subunit protein uS3 (241 aa).

Positions 39–109 (VRNYVNKNLS…PIRINVVEVA (71 aa)) constitute a KH type-2 domain. Residues 213-241 (ADEQPTNREPQQRRRQQQRRRQQFEDRSE) form a disordered region.

It belongs to the universal ribosomal protein uS3 family. In terms of assembly, part of the 30S ribosomal subunit. Forms a tight complex with proteins S10 and S14.

Binds the lower part of the 30S subunit head. Binds mRNA in the 70S ribosome, positioning it for translation. This is Small ribosomal subunit protein uS3 from Acaryochloris marina (strain MBIC 11017).